A 283-amino-acid chain; its full sequence is MAGNFWQSSHYLQWILDKQDLLKERQKDLKFLSEEEYWKLQIFFTNVIQALGEHLKLRQQVIATATVYFKRFYARYSLKSIDPVLMAPTCVFLASKVEEFGVVSNTRLIAAATSVLKTRFSYAFPKEFPYKMNHVLECEFYLLELMDCCLIVYHPYRPLLQYVQDMGQEDMLLPLAWRIVNDTYRTDLCLLYPPFMIALACLHVACVVQQKDARQWFAELSVDMEKILEIIRVILKLYEQWKNFDERKEMATILSKMPKPKPPPNSEGEQGPNGSQNSSYSQS.

The region spanning 46–144 (NVIQALGEHL…VLECEFYLLE (99 aa)) is the Cyclin N-terminal domain. Residues 252–283 (TILSKMPKPKPPPNSEGEQGPNGSQNSSYSQS) are disordered. Over residues 272–283 (PNGSQNSSYSQS) the composition is skewed to polar residues. Residue Ser275 is modified to Phosphoserine.

This sequence belongs to the cyclin family. Cyclin C subfamily. In terms of assembly, component of the Mediator complex, which is composed of MED1, MED4, MED6, MED7, MED8, MED9, MED10, MED11, MED12, MED13, MED13L, MED14, MED15, MED16, MED17, MED18, MED19, MED20, MED21, MED22, MED23, MED24, MED25, MED26, MED27, MED29, MED30, MED31, CCNC, CDK8 and CDC2L6/CDK11. The MED12, MED13, CCNC and CDK8 subunits form a distinct module termed the CDK8 module. Mediator containing the CDK8 module is less active than Mediator lacking this module in supporting transcriptional activation. Individual preparations of the Mediator complex lacking one or more distinct subunits have been variously termed ARC, CRSP, DRIP, PC2, SMCC and TRAP. The cylin/CDK pair formed by CCNC/CDK8 also associates with the large subunit of RNA polymerase II.

It is found in the nucleus. Functionally, component of the Mediator complex, a coactivator involved in regulated gene transcription of nearly all RNA polymerase II-dependent genes. Mediator functions as a bridge to convey information from gene-specific regulatory proteins to the basal RNA polymerase II transcription machinery. Mediator is recruited to promoters by direct interactions with regulatory proteins and serves as a scaffold for the assembly of a functional preinitiation complex with RNA polymerase II and the general transcription factors. Binds to and activates cyclin-dependent kinase CDK8 that phosphorylates the CTD (C-terminal domain) of the large subunit of RNA polymerase II (RNAp II), which may inhibit the formation of a transcription initiation complex. The chain is Cyclin-C (CCNC) from Bos taurus (Bovine).